Consider the following 392-residue polypeptide: Protein RecA (392 aa).

Residues 1 to 21 are disordered; that stretch reads MALETKPAQDPATEIKHELDP. An ATP-binding site is contributed by 83-90; the sequence is GPESSGKT. Residues 372–392 form a disordered region; the sequence is DAAKDTKATAAPAAKSSRAKA. Over residues 379 to 392 the composition is skewed to low complexity; sequence ATAAPAAKSSRAKA.

This sequence belongs to the RecA family.

The protein resides in the cytoplasm. Its function is as follows. Can catalyze the hydrolysis of ATP in the presence of single-stranded DNA, the ATP-dependent uptake of single-stranded DNA by duplex DNA, and the ATP-dependent hybridization of homologous single-stranded DNAs. It interacts with LexA causing its activation and leading to its autocatalytic cleavage. The protein is Protein RecA of Bifidobacterium breve.